A 484-amino-acid polypeptide reads, in one-letter code: Threonine synthase-like 2 (484 aa).

N6-(pyridoxal phosphate)lysine is present on lysine 113.

The protein belongs to the threonine synthase family. Pyridoxal 5'-phosphate serves as cofactor.

Functionally, acts as a catabolic phospho-lyase on both gamma- and beta-phosphorylated substrates. Degrades O-phospho-threonine (PThr) to alpha-ketobutyrate, ammonia and phosphate. The chain is Threonine synthase-like 2 (THNSL2) from Pongo abelii (Sumatran orangutan).